We begin with the raw amino-acid sequence, 190 residues long: Protein LIGHT-DEPENDENT SHORT HYPOCOTYLS 1 (190 aa).

Polar residues predominate over residues 1–26 (MDLISHQPNKNPNSSTQLTPPSSSRY). 2 disordered regions span residues 1 to 28 (MDLI…RYEN) and 145 to 190 (GVSY…GATV). Residues 25-152 (RYENQKRRDW…ARGVSYEKKR (128 aa)) enclose the ALOG domain. The Nuclear localization signal motif lies at 150–154 (KKRKR). Residues 158 to 179 (QKPQTQPPLQLQQQQQQPQQGQ) show a composition bias toward low complexity. Over residues 180–190 (SMMANYSGATV) the composition is skewed to polar residues.

The protein belongs to the plant homeotic and developmental regulators ALOG protein family. Expressed in hypocotyls, shoot apices and lateral root primordia and, weakly, in vascular tissues.

It is found in the nucleus. Its function is as follows. Probable transcription regulator that acts as a developmental regulator by promoting cell growth in response to continuous red (cR), far-red (cFR) and blue (cB) light in a phytochrome-dependent manner, at least during seedling development. The protein is Protein LIGHT-DEPENDENT SHORT HYPOCOTYLS 1 (LSH1) of Arabidopsis thaliana (Mouse-ear cress).